Consider the following 547-residue polypeptide: Large cysteine-rich periplasmic protein OmcB, serovar E (547 aa).

The first 22 residues, 1–22 (MNKLIRRAVTIFAVTSVASLFA), serve as a signal peptide directing secretion. Positions 23-40 (SGVLETSMAESLSTNVIS) are excised as a propeptide. Residues 46–83 (AKDNTSHKSKKARKNHSKETLVDRKEVAPVHESKATGP) form a disordered region. A compositionally biased stretch (basic residues) spans 52-61 (HKSKKARKNH). The span at 62–79 (SKETLVDRKEVAPVHESK) shows a compositional bias: basic and acidic residues.

As to quaternary structure, part of a disulfide cross-linked outer membrane complex (COMC) composed of the major outer membrane porin (MOMP), the small cysteine-rich protein (OmcA) and the large cysteine-rich periplasmic protein (OmcB).

It is found in the periplasm. In terms of biological role, in elementary bodies (EBs, the infectious stage, which is able to survive outside the host cell) provides the structural integrity of the outer envelope through disulfide cross-links with the small cysteine-rich protein and the major outer membrane protein. It has been described in publications as the Sarkosyl-insoluble COMC (Chlamydia outer membrane complex), and serves as the functional equivalent of peptidoglycan. The sequence is that of Large cysteine-rich periplasmic protein OmcB, serovar E (omcB) from Chlamydia trachomatis.